The chain runs to 458 residues: UDP-N-acetylmuramate--L-alanine ligase (458 aa).

Position 118-124 (Gly-118–Thr-124) interacts with ATP.

The protein belongs to the MurCDEF family.

It is found in the cytoplasm. The catalysed reaction is UDP-N-acetyl-alpha-D-muramate + L-alanine + ATP = UDP-N-acetyl-alpha-D-muramoyl-L-alanine + ADP + phosphate + H(+). It functions in the pathway cell wall biogenesis; peptidoglycan biosynthesis. Cell wall formation. This Clostridium botulinum (strain ATCC 19397 / Type A) protein is UDP-N-acetylmuramate--L-alanine ligase.